The sequence spans 347 residues: Bifunctional methylenetetrahydrofolate dehydrogenase/cyclohydrolase 2, mitochondrial (347 aa).

Residues 98-102 and 145-147 each bind substrate; these read YVRNK and VQL. NAD(+) is bound by residues 214 to 216 and arginine 247; that span reads GRS. 323–327 contacts substrate; sequence PGGVG.

Belongs to the tetrahydrofolate dehydrogenase/cyclohydrolase family. The cofactor is Mg(2+).

The protein localises to the mitochondrion inner membrane. It carries out the reaction (6R)-5,10-methylene-5,6,7,8-tetrahydrofolate + NAD(+) = (6R)-5,10-methenyltetrahydrofolate + NADH. The enzyme catalyses (6R)-5,10-methenyltetrahydrofolate + H2O = (6R)-10-formyltetrahydrofolate + H(+). It catalyses the reaction (6R)-5,10-methylene-5,6,7,8-tetrahydrofolate + NADP(+) = (6R)-5,10-methenyltetrahydrofolate + NADPH. The protein operates within one-carbon metabolism; tetrahydrofolate interconversion. Its function is as follows. Bifunctional mitochondrial folate-interconverting enzyme that has both NAD/NADP-dependent methylenetetrahydrofolate dehydrogenase and methenyltetrahydrofolate cyclohydrolase activities. This is Bifunctional methylenetetrahydrofolate dehydrogenase/cyclohydrolase 2, mitochondrial from Callithrix jacchus (White-tufted-ear marmoset).